The sequence spans 868 residues: Probable inorganic carbon transporter subunit DabA (868 aa).

4 residues coordinate Zn(2+): Cys392, Asp394, His574, and Cys589.

It belongs to the inorganic carbon transporter (TC 9.A.2) DabA family. As to quaternary structure, forms a complex with DabB. The cofactor is Zn(2+).

The protein resides in the cell membrane. Its function is as follows. Part of an energy-coupled inorganic carbon pump. This Bacillus cereus (strain G9842) protein is Probable inorganic carbon transporter subunit DabA.